Here is a 359-residue protein sequence, read N- to C-terminus: Phosphate acyltransferase (359 aa).

Positions 338 to 359 are disordered; sequence LEGAAGRAARPPPPRRASSHDA.

Belongs to the PlsX family. In terms of assembly, homodimer. Probably interacts with PlsY.

The protein resides in the cytoplasm. It carries out the reaction a fatty acyl-[ACP] + phosphate = an acyl phosphate + holo-[ACP]. Its pathway is lipid metabolism; phospholipid metabolism. In terms of biological role, catalyzes the reversible formation of acyl-phosphate (acyl-PO(4)) from acyl-[acyl-carrier-protein] (acyl-ACP). This enzyme utilizes acyl-ACP as fatty acyl donor, but not acyl-CoA. This Anaeromyxobacter sp. (strain Fw109-5) protein is Phosphate acyltransferase.